We begin with the raw amino-acid sequence, 345 residues long: Isocitrate/homoisocitrate dehydrogenase (345 aa).

69–71 (TTT) lines the NADH pocket. (2R,3S)-homoisocitrate contacts are provided by Arg-86, Arg-96, Arg-111, Tyr-118, Lys-163, and Asn-165. Residue Asn-165 participates in NADH binding. Residues Asp-194, Asp-218, and Asp-222 each coordinate Mg(2+). Residues 251-255 (GSAPD) and Asn-263 contribute to the NADH site.

Belongs to the isocitrate and isopropylmalate dehydrogenases family. Requires Mn(2+) as cofactor. Mg(2+) serves as cofactor.

The catalysed reaction is D-threo-isocitrate + NAD(+) = 2-oxoglutarate + CO2 + NADH. The enzyme catalyses (2R,3S)-homoisocitrate + NAD(+) = 2-oxoadipate + CO2 + NADH. The protein operates within amino-acid biosynthesis; L-lysine biosynthesis via AAA pathway; L-alpha-aminoadipate from 2-oxoglutarate: step 4/5. In terms of biological role, catalyzes the NAD(+)-dependent oxidative decarboxylation of homoisocitrate to 2-oxoadipate (alpha-ketoadipate), and of isocitrate to 2-oxoglutarate, at near equal efficiency. May thus play a dual role in glutamate and lysine biosynthesis in vivo. Preferentially uses NAD over NADP. The protein is Isocitrate/homoisocitrate dehydrogenase of Pyrococcus horikoshii (strain ATCC 700860 / DSM 12428 / JCM 9974 / NBRC 100139 / OT-3).